Here is an 864-residue protein sequence, read N- to C-terminus: Receptor like protein 24 (864 aa).

Positions 1–29 (MKTVFKSLLLLHFLLLLLLCFVSPSSFFL) are cleaved as a signal peptide. Residues 30 to 830 (LKVPVGGLVA…EEKGEVINWK (801 aa)) are Extracellular-facing. N-linked (GlcNAc...) asparagine glycans are attached at residues Asn61, Asn73, Asn94, and Asn112. LRR repeat units follow at residues 100–125 (FHQL…FCNL), 127–148 (KLKL…DLMG), 156–182 (LGKL…LFEL), 183–205 (HSLR…KFGN), 207–229 (NKLE…TISN), 230–253 (LTRI…VQNL), 254–277 (TKLS…LFTF), 279–303 (SLST…STSS), 305–326 (LEIM…ISKL), 327–350 (INLK…LLSP), 351–376 (LKSL…SYIP), 378–398 (SMES…ILKH), 399–423 (LQNL…LWTL), 425–448 (QLSF…VFVN), and 449–472 (LSVR…PLSI). Asn176, Asn194, Asn229, and Asn252 each carry an N-linked (GlcNAc...) asparagine glycan. A glycan (N-linked (GlcNAc...) asparagine) is linked at Asn298. An N-linked (GlcNAc...) asparagine glycan is attached at Asn338. Asn433 and Asn448 each carry an N-linked (GlcNAc...) asparagine glycan. Residues 473–492 (IGFSAIHNSFTGEIPLSICN) form an LRR 16; degenerate repeat. N-linked (GlcNAc...) asparagine glycosylation is found at Asn492 and Asn505. 10 LRR repeats span residues 493–514 (RTSL…PQCL), 515–538 (SNFM…FYTD), 539–562 (SSLK…LLNC), 564–585 (SLRF…WLKA), 586–610 (LPNL…HQGP), 613–637 (FPEL…FFVN), 688–712 (LTSY…IGLL), 713–735 (KALI…SFAN), 736–760 (LMNL…LGSL), and 762–785 (FLVY…QITG). Residue Asn561 is glycosylated (N-linked (GlcNAc...) asparagine). Asn719 carries N-linked (GlcNAc...) asparagine glycosylation. The helical transmembrane segment at 831-851 (AVAIGYAPGLLFGLAIAHLIA) threads the bilayer. Residues 852–864 (SYKPEWLVKIIGF) lie on the Cytoplasmic side of the membrane.

The protein belongs to the RLP family.

Its subcellular location is the cell membrane. In Arabidopsis thaliana (Mouse-ear cress), this protein is Receptor like protein 24.